The sequence spans 371 residues: Maltose/maltodextrin import ATP-binding protein MalK (371 aa).

The region spanning 4-234 (VQLQNVTKAW…PADRFVAGFI (231 aa)) is the ABC transporter domain. 36-43 (GPSGCGKS) lines the ATP pocket.

Belongs to the ABC transporter superfamily. Maltooligosaccharide importer (TC 3.A.1.1.1) family. The complex is composed of two ATP-binding proteins (MalK), two transmembrane proteins (MalG and MalK) and a solute-binding protein (MalE).

The protein resides in the cell inner membrane. It carries out the reaction D-maltose(out) + ATP + H2O = D-maltose(in) + ADP + phosphate + H(+). Part of the ABC transporter complex MalEFGK involved in maltose/maltodextrin import. Responsible for energy coupling to the transport system. The polypeptide is Maltose/maltodextrin import ATP-binding protein MalK (Escherichia coli O157:H7).